A 163-amino-acid chain; its full sequence is Nucleotide-binding protein CYB_0891 (163 aa).

It belongs to the YajQ family.

Its function is as follows. Nucleotide-binding protein. This is Nucleotide-binding protein CYB_0891 from Synechococcus sp. (strain JA-2-3B'a(2-13)) (Cyanobacteria bacterium Yellowstone B-Prime).